Here is a 185-residue protein sequence, read N- to C-terminus: Large ribosomal subunit protein uL16m (185 aa).

Belongs to the universal ribosomal protein uL16 family.

It localises to the mitochondrion. This Oryza sativa subsp. japonica (Rice) protein is Large ribosomal subunit protein uL16m (RPL16).